The following is an 87-amino-acid chain: Toxin CsEv3 (87 aa).

An N-terminal signal peptide occupies residues 1–19 (MNSLLMITACLFLIGTVWA). The 66-residue stretch at 20–85 (KEGYLVNKST…TYPLPNKSCG (66 aa)) folds into the LCN-type CS-alpha/beta domain. 4 disulfide bridges follow: cysteine 31-cysteine 84, cysteine 35-cysteine 60, cysteine 44-cysteine 65, and cysteine 48-cysteine 67. Cysteine 84 is subject to Cysteine amide.

The protein belongs to the long (4 C-C) scorpion toxin superfamily. Sodium channel inhibitor family. Beta subfamily. Expressed by the venom gland.

It localises to the secreted. In terms of biological role, beta toxins bind voltage-independently at site-4 of sodium channels (Nav) and shift the voltage of activation toward more negative potentials thereby affecting sodium channel activation and promoting spontaneous and repetitive firing. Induces immediate paralysis in crickets after injection, with a total paralysis occurring within 15-30 minutes and lasting for 1-2 hours. Is also lethal to vertebrate (chicks) when injected in very high dosages (more that 100 mg/kg). This Centruroides sculpturatus (Arizona bark scorpion) protein is Toxin CsEv3.